An 882-amino-acid polypeptide reads, in one-letter code: Alanine--tRNA ligase (882 aa).

Residues H568, H572, C670, and H674 each contribute to the Zn(2+) site.

This sequence belongs to the class-II aminoacyl-tRNA synthetase family. Requires Zn(2+) as cofactor.

Its subcellular location is the cytoplasm. It carries out the reaction tRNA(Ala) + L-alanine + ATP = L-alanyl-tRNA(Ala) + AMP + diphosphate. In terms of biological role, catalyzes the attachment of alanine to tRNA(Ala) in a two-step reaction: alanine is first activated by ATP to form Ala-AMP and then transferred to the acceptor end of tRNA(Ala). Also edits incorrectly charged Ser-tRNA(Ala) and Gly-tRNA(Ala) via its editing domain. The sequence is that of Alanine--tRNA ligase from Syntrophotalea carbinolica (strain DSM 2380 / NBRC 103641 / GraBd1) (Pelobacter carbinolicus).